Here is a 215-residue protein sequence, read N- to C-terminus: Nascent polypeptide-associated complex subunit alpha (215 aa).

Positions Met-1–Ser-81 are disordered. Polar residues predominate over residues Val-9–Glu-28. Residues Ser-29–Asp-42 show a composition bias toward acidic residues. At Ser-43 the chain carries Phosphoserine; by ILK1. A compositionally biased stretch (low complexity) spans Thr-44 to Ala-57. Residues Gln-69–Met-80 form a required for DNA-binding region. One can recognise an NAC-A/B domain in the interval Ser-70–Ala-135. Residues Arg-93–Lys-108 form an RNA/DNA-binding region. Phosphoserine is present on Ser-132. At Lys-142 the chain carries N6-acetyllysine; alternate. Lys-142 participates in a covalent cross-link: Glycyl lysine isopeptide (Lys-Gly) (interchain with G-Cter in SUMO2); alternate. Position 159 is a phosphothreonine; by GSK3-beta (Thr-159). Thr-161 carries the phosphothreonine modification. 4 positions are modified to phosphoserine: Ser-166, Ser-186, Ser-191, and Ser-203. The UBA domain occupies Val-176–Leu-213.

The protein belongs to the NAC-alpha family. Part of the nascent polypeptide-associated complex (NAC), which is a heterodimer of NACA and BTF3 (via NAC-A/B domains). NAC associates with ribosomes through the BTF3/NACB subunit and contacts the ribosomal protein L23, which is positioned near the exiting site. Both subunits can contact nascent polypeptide chains. NACA may also form homodimers, and only this form binds DNA. Interacts with TBP and JUN. Phosphorylation of Ser-43 by ILK during cell adhesion may promote nuclear localization. Phosphorylation of Thr-159 by GSK3B may promote proteasome mediated degradation.

Its subcellular location is the cytoplasm. The protein localises to the nucleus. In terms of biological role, prevents inappropriate targeting of non-secretory polypeptides to the endoplasmic reticulum (ER). Binds to nascent polypeptide chains as they emerge from the ribosome and blocks their interaction with the signal recognition particle (SRP), which normally targets nascent secretory peptides to the ER. Also reduces the inherent affinity of ribosomes for protein translocation sites in the ER membrane (M sites). May act as a specific coactivator for JUN, binding to DNA and stabilizing the interaction of JUN homodimers with target gene promoters. The polypeptide is Nascent polypeptide-associated complex subunit alpha (NACA) (Pongo abelii (Sumatran orangutan)).